The chain runs to 97 residues: DNA/RNA-binding protein Alba (97 aa).

Residue lysine 15 is modified to N6-acetyllysine.

This sequence belongs to the histone-like Alba family. In terms of processing, acetylated. Acetylation at Lys-15 decreases DNA-binding affinity.

Its subcellular location is the cytoplasm. The protein resides in the chromosome. Functionally, binds double-stranded DNA tightly but without sequence specificity. Involved in DNA compaction. The sequence is that of DNA/RNA-binding protein Alba from Sulfolobus acidocaldarius (strain ATCC 33909 / DSM 639 / JCM 8929 / NBRC 15157 / NCIMB 11770).